Reading from the N-terminus, the 274-residue chain is 2,3,4,5-tetrahydropyridine-2,6-dicarboxylate N-succinyltransferase (274 aa).

It belongs to the transferase hexapeptide repeat family.

The protein localises to the cytoplasm. The catalysed reaction is (S)-2,3,4,5-tetrahydrodipicolinate + succinyl-CoA + H2O = (S)-2-succinylamino-6-oxoheptanedioate + CoA. It functions in the pathway amino-acid biosynthesis; L-lysine biosynthesis via DAP pathway; LL-2,6-diaminopimelate from (S)-tetrahydrodipicolinate (succinylase route): step 1/3. In Escherichia coli (strain SMS-3-5 / SECEC), this protein is 2,3,4,5-tetrahydropyridine-2,6-dicarboxylate N-succinyltransferase.